We begin with the raw amino-acid sequence, 375 residues long: Carbamoyl phosphate synthase small chain (375 aa).

A CPSase region spans residues 1–184; the sequence is MVSLYLENGL…LDYKPFDEKI (184 aa). The L-glutamine site is built by Ser44, Gly240, and Gly242. Positions 188 to 375 constitute a Glutamine amidotransferase type-1 domain; the sequence is IIAVLDFGAK…KEFVGLLEGF (188 aa). The active-site Nucleophile is Cys268. L-glutamine contacts are provided by Leu269, Gln272, Asn310, and Tyr313. Residues His351 and Glu353 contribute to the active site.

Belongs to the CarA family. As to quaternary structure, composed of two chains; the small (or glutamine) chain promotes the hydrolysis of glutamine to ammonia, which is used by the large (or ammonia) chain to synthesize carbamoyl phosphate. Tetramer of heterodimers (alpha,beta)4.

The enzyme catalyses hydrogencarbonate + L-glutamine + 2 ATP + H2O = carbamoyl phosphate + L-glutamate + 2 ADP + phosphate + 2 H(+). The catalysed reaction is L-glutamine + H2O = L-glutamate + NH4(+). The protein operates within amino-acid biosynthesis; L-arginine biosynthesis; carbamoyl phosphate from bicarbonate: step 1/1. It functions in the pathway pyrimidine metabolism; UMP biosynthesis via de novo pathway; (S)-dihydroorotate from bicarbonate: step 1/3. Its function is as follows. Small subunit of the glutamine-dependent carbamoyl phosphate synthetase (CPSase). CPSase catalyzes the formation of carbamoyl phosphate from the ammonia moiety of glutamine, carbonate, and phosphate donated by ATP, constituting the first step of 2 biosynthetic pathways, one leading to arginine and/or urea and the other to pyrimidine nucleotides. The small subunit (glutamine amidotransferase) binds and cleaves glutamine to supply the large subunit with the substrate ammonia. The sequence is that of Carbamoyl phosphate synthase small chain from Helicobacter pylori (strain J99 / ATCC 700824) (Campylobacter pylori J99).